Consider the following 152-residue polypeptide: Transcriptional regulator MraZ (152 aa).

SpoVT-AbrB domains follow at residues 5-52 (ANAV…PLPE) and 81-124 (AVDL…NEDA).

Belongs to the MraZ family. As to quaternary structure, forms oligomers.

It localises to the cytoplasm. It is found in the nucleoid. The sequence is that of Transcriptional regulator MraZ from Azotobacter vinelandii (strain DJ / ATCC BAA-1303).